A 140-amino-acid polypeptide reads, in one-letter code: Auxin-responsive protein IAA26 (140 aa).

The segment at 1 to 40 (MASYGDDGVELTELTLGPPGASARRARRGRKNGHPPPSSS) is disordered. The EAR-like (transcriptional repression) signature appears at 14 to 18 (LTLGP). Residues 24-33 (RRARRGRKNG) are compositionally biased toward basic residues. Residues 45 to 130 (AYFVKVSMDG…SCKRMRVMRA (86 aa)) form the PB1 domain.

Belongs to the Aux/IAA family. Homodimers and heterodimers. Expressed in roots, seedlings and flowers.

The protein resides in the nucleus. Its function is as follows. Aux/IAA proteins are short-lived transcriptional factors that function as repressors of early auxin response genes at low auxin concentrations. In Oryza sativa subsp. japonica (Rice), this protein is Auxin-responsive protein IAA26 (IAA26).